Here is a 1537-residue protein sequence, read N- to C-terminus: Leucine-rich repeat-containing protein 7 (1537 aa).

LRR repeat units lie at residues 23–44 (IISV…VFNF), 47–68 (TLEE…LFNC), 70–91 (ALRK…IASL), 93–114 (NLKE…IKCC), 116–137 (CLTI…FTQL), 139–161 (NLTQ…GRLV), 162–183 (KLRI…MHKL), 185–206 (QLER…LDQI), 208–229 (NLRE…IGKL), 231–253 (MLVY…SGCE), 254–275 (ALED…IGLL), 277–298 (KLTT…IGNL), 300–321 (LLEE…IGYL), 323–344 (SLRT…IGSC), 346–367 (NVTV…IGQM), 369–391 (KLRV…TKLK), and 392–413 (ELAA…QTEA). Residues Ser-439, Ser-441, and Ser-443 each carry the phosphoserine modification. A compositionally biased stretch (basic and acidic residues) spans 663–676 (KKESTDESEVDKTH). Disordered stretches follow at residues 663-709 (KKES…VGSL), 730-759 (FPQP…DRLP), 786-810 (AENA…RRPL), and 824-892 (EQST…SPGV). Polar residues predominate over residues 677–709 (CLNNSVSSGTYSDYSPSQASSGSSNTRVKVGSL). Residues 790–804 (NSNPLLSSKSRSTSS) are compositionally biased toward low complexity. Position 831 is a phosphothreonine (Thr-831). Phosphoserine is present on Ser-850. Residues 859–871 (PSKLETTPTTSPL) are compositionally biased toward low complexity. A Phosphothreonine modification is found at Thr-865. Ser-869 is modified (phosphoserine). Over residues 872 to 882 (PERKEHIKEST) the composition is skewed to basic and acidic residues. 3 positions are modified to phosphoserine: Ser-947, Ser-949, and Ser-1118. The tract at residues 1136–1159 (ELPPTDRYGRPPYRGGLDRQSSVT) is disordered. The residue at position 1149 (Arg-1149) is an Omega-N-methylarginine. Residue Ser-1233 is modified to Phosphoserine. Disordered stretches follow at residues 1234–1265 (DYNL…SCGK) and 1331–1360 (QKTP…YPLG). The segment covering 1243–1263 (KPSDNSDLKTRPTPVKGEESC) has biased composition (basic and acidic residues). Residues 1332 to 1354 (KTPSQQSNILDNGQEDVSPSGQW) are compositionally biased toward polar residues. Phosphoserine occurs at positions 1335 and 1439. In terms of domain architecture, PDZ spans 1445–1535 (EQFCVRIEKN…TVDLVIQREL (91 aa)).

This sequence belongs to the LAP (LRR and PDZ) protein family. In terms of assembly, interacts with CNKSR2 and DLG4. Interacts with CTNND2/Catenin delta-2. Forms a complex with N-cadherin through CTNND2. Interacts with CAMK2A. Brain-specific. Isoform 3 is ubiquitously expressed.

It is found in the cytoplasm. It localises to the postsynaptic density. Functionally, required for normal synaptic spine architecture and function. Necessary for DISC1 and GRM5 localization to postsynaptic density complexes and for both N-methyl D-aspartate receptor-dependent and metabotropic glutamate receptor-dependent long term depression. This Homo sapiens (Human) protein is Leucine-rich repeat-containing protein 7 (LRRC7).